The primary structure comprises 258 residues: Ribosomal RNA small subunit methyltransferase J (258 aa).

S-adenosyl-L-methionine-binding positions include 107–108 (RD), 123–124 (ER), 159–160 (SS), and Asp-177.

Belongs to the methyltransferase superfamily. RsmJ family.

The protein resides in the cytoplasm. It carries out the reaction guanosine(1516) in 16S rRNA + S-adenosyl-L-methionine = N(2)-methylguanosine(1516) in 16S rRNA + S-adenosyl-L-homocysteine + H(+). Specifically methylates the guanosine in position 1516 of 16S rRNA. This is Ribosomal RNA small subunit methyltransferase J from Shewanella sediminis (strain HAW-EB3).